The primary structure comprises 238 residues: ATP synthase subunit a (238 aa).

A run of 5 helical transmembrane segments spans residues 18–38 (LTLL…VFWA), 76–96 (YSLL…LGLF), 114–134 (NLAF…IEGV), 166–186 (SLAI…GLIV), and 193–213 (VYWW…SVFI).

It belongs to the ATPase A chain family. In terms of assembly, F-type ATPases have 2 components, CF(1) - the catalytic core - and CF(0) - the membrane proton channel. CF(1) has five subunits: alpha(3), beta(3), gamma(1), delta(1), epsilon(1). CF(0) has three main subunits: a(1), b(2) and c(9-12). The alpha and beta chains form an alternating ring which encloses part of the gamma chain. CF(1) is attached to CF(0) by a central stalk formed by the gamma and epsilon chains, while a peripheral stalk is formed by the delta and b chains.

Its subcellular location is the cell membrane. Key component of the proton channel; it plays a direct role in the translocation of protons across the membrane. The sequence is that of ATP synthase subunit a from Streptococcus pyogenes serotype M5 (strain Manfredo).